We begin with the raw amino-acid sequence, 279 residues long: Diaminopimelate epimerase (279 aa).

Substrate is bound by residues N12, Q45, and N65. The active-site Proton donor is the C74. Residues 75 to 76 (GN), N162, N195, and 213 to 214 (ER) contribute to the substrate site. The active-site Proton acceptor is C222. Residue 223-224 (GT) coordinates substrate.

The protein belongs to the diaminopimelate epimerase family. As to quaternary structure, homodimer.

It localises to the cytoplasm. The enzyme catalyses (2S,6S)-2,6-diaminopimelate = meso-2,6-diaminopimelate. It participates in amino-acid biosynthesis; L-lysine biosynthesis via DAP pathway; DL-2,6-diaminopimelate from LL-2,6-diaminopimelate: step 1/1. Its function is as follows. Catalyzes the stereoinversion of LL-2,6-diaminopimelate (L,L-DAP) to meso-diaminopimelate (meso-DAP), a precursor of L-lysine and an essential component of the bacterial peptidoglycan. This is Diaminopimelate epimerase from Shewanella woodyi (strain ATCC 51908 / MS32).